Consider the following 50-residue polypeptide: MRVLLIIAGLALLSVVCYTSEMKEQNSLNEVLSAFFDVEEPPEKGCIICF.

An N-terminal signal peptide occupies residues 1–19; the sequence is MRVLLIIAGLALLSVVCYT.

It belongs to the neurotoxin 10 (Hwtx-1) family. 67 (Jztx-67) subfamily. In terms of tissue distribution, expressed by the venom gland.

It localises to the secreted. The sequence is that of U37-theraphotoxin-Cg1b from Chilobrachys guangxiensis (Chinese earth tiger tarantula).